Here is a 365-residue protein sequence, read N- to C-terminus: MMKEEQWAPVIVMLISSVAMGSVNALVKKALDVGVNHMIFGAYRMAISALILVPFSYIWERKTRPQLTFMLLCEHFISGLLGASLMQFFFLLGLSYTSATVSMALVSMLPAITFALALIFRIENAQNLKSKAGVLKVMGTLICIMGAMLLTFYKGPELSNPHSHPQARHNNNNNNGHDQTKKWLLGCLYLVIGTVLLSLWMLFQGKLSFKYPGNKYSSTCLMSVFASFQCAILSLYKSRDVKDWIIEDKFVILVTLYAGIVGQAMSTVVTSWSIKMTGAVFVSTFSPVSLVAATLFDFLILHSPLYLGSILGSVVTITGLYVFLWGRKNETDQSVSKTLNSSQFSQNKDNEDHTIANHKDTNLPV.

10 consecutive transmembrane segments (helical) span residues 7–27, 39–59, 76–96, 100–120, 132–152, 183–203, 216–236, 250–270, 280–300, and 305–325; these read WAPV…NALV, IFGA…SYIW, FISG…GLSY, TVSM…ALIF, AGVL…LLTF, WLLG…WMLF, YSST…LSLY, FVIL…TVVT, VFVS…DFLI, and LYLG…VFLW. Residues 20–151 form the EamA 1 domain; the sequence is MGSVNALVKK…ICIMGAMLLT (132 aa). The EamA 2 domain occupies 216–324; sequence YSSTCLMSVF…VTITGLYVFL (109 aa). Residues 339-365 form a disordered region; it reads LNSSQFSQNKDNEDHTIANHKDTNLPV. A compositionally biased stretch (basic and acidic residues) spans 348–365; it reads KDNEDHTIANHKDTNLPV.

This sequence belongs to the drug/metabolite transporter (DMT) superfamily. Plant drug/metabolite exporter (P-DME) (TC 2.A.7.4) family.

The protein resides in the membrane. The polypeptide is WAT1-related protein At4g01430 (Arabidopsis thaliana (Mouse-ear cress)).